The chain runs to 142 residues: Transcription antitermination protein NusB (142 aa).

Belongs to the NusB family.

Involved in transcription antitermination. Required for transcription of ribosomal RNA (rRNA) genes. Binds specifically to the boxA antiterminator sequence of the ribosomal RNA (rrn) operons. The chain is Transcription antitermination protein NusB from Streptococcus mutans serotype c (strain ATCC 700610 / UA159).